Here is a 319-residue protein sequence, read N- to C-terminus: Quinolinate synthase (319 aa).

Positions 35 and 52 each coordinate iminosuccinate. Cys-97 provides a ligand contact to [4Fe-4S] cluster. Iminosuccinate contacts are provided by residues 123–125 (YIN) and Ser-140. Residue Cys-183 coordinates [4Fe-4S] cluster. Iminosuccinate contacts are provided by residues 209 to 211 (HPE) and Thr-226. Cys-276 contacts [4Fe-4S] cluster.

It belongs to the quinolinate synthase family. Type 2 subfamily. [4Fe-4S] cluster is required as a cofactor.

The protein resides in the cytoplasm. It carries out the reaction iminosuccinate + dihydroxyacetone phosphate = quinolinate + phosphate + 2 H2O + H(+). It participates in cofactor biosynthesis; NAD(+) biosynthesis; quinolinate from iminoaspartate: step 1/1. In terms of biological role, catalyzes the condensation of iminoaspartate with dihydroxyacetone phosphate to form quinolinate. In Microcystis aeruginosa (strain NIES-843 / IAM M-2473), this protein is Quinolinate synthase.